Reading from the N-terminus, the 205-residue chain is Adenylyl-sulfate kinase (205 aa).

31-38 contacts ATP; the sequence is GLSGAGKS. The Phosphoserine intermediate role is filled by S105.

It belongs to the APS kinase family.

It catalyses the reaction adenosine 5'-phosphosulfate + ATP = 3'-phosphoadenylyl sulfate + ADP + H(+). It functions in the pathway sulfur metabolism; hydrogen sulfide biosynthesis; sulfite from sulfate: step 2/3. Functionally, catalyzes the synthesis of activated sulfate. This Shewanella denitrificans (strain OS217 / ATCC BAA-1090 / DSM 15013) protein is Adenylyl-sulfate kinase.